A 240-amino-acid chain; its full sequence is MTERYFVTGTDTEVGKTVASCALLQAAAQAGWQTAGYKPVASGSEMTPEGLRNSDALALQHNSTLALRYEAVNPYTFAEPTSPHIVSAALGQPIEAETLSAGLRMLEAQAEWVLVEGAGGWFTPLSETLTFADWATQEQLPVILVVGVKLGCINHAVLTAQAVQQAGLRLAGWVANDVVPPGQRHTEYLATLKRMLPAPFLGEIPWLENVAPESDIGHWLDLSALGSASSTGKAADRPAV.

Residue 13-18 (EVGKTV) participates in ATP binding. Thr-17 is a Mg(2+) binding site. Residue Lys-38 is part of the active site. Ser-42 is a substrate binding site. Residues Asp-55, 116 to 119 (EGAG), 176 to 177 (ND), and 205 to 207 (PWL) contribute to the ATP site. 2 residues coordinate Mg(2+): Asp-55 and Glu-116.

This sequence belongs to the dethiobiotin synthetase family. As to quaternary structure, homodimer. Mg(2+) is required as a cofactor.

The protein localises to the cytoplasm. The catalysed reaction is (7R,8S)-7,8-diammoniononanoate + CO2 + ATP = (4R,5S)-dethiobiotin + ADP + phosphate + 3 H(+). Its pathway is cofactor biosynthesis; biotin biosynthesis; biotin from 7,8-diaminononanoate: step 1/2. Functionally, catalyzes a mechanistically unusual reaction, the ATP-dependent insertion of CO2 between the N7 and N8 nitrogen atoms of 7,8-diaminopelargonic acid (DAPA, also called 7,8-diammoniononanoate) to form a ureido ring. The polypeptide is ATP-dependent dethiobiotin synthetase BioD (Pseudescherichia vulneris (Escherichia vulneris)).